A 326-amino-acid polypeptide reads, in one-letter code: Holliday junction branch migration complex subunit RuvB (326 aa).

Positions 1-180 are large ATPase domain (RuvB-L); that stretch reads MRSISCSKEY…FGIPLRLEFY (180 aa). Residues Ile-19, Arg-20, Gly-61, Lys-64, Thr-65, Thr-66, 127–129, Arg-170, Tyr-180, and Arg-217 each bind ATP; that span reads EDF. Thr-65 is a binding site for Mg(2+). The segment at 181 to 251 is small ATPAse domain (RuvB-S); it reads SFEELVDIIK…IADSALSKLG (71 aa). The tract at residues 254-326 is head domain (RuvB-H); sequence KMGLNKLDVD…QGKEYLSLQY (73 aa). 2 residues coordinate DNA: Arg-307 and Arg-312.

This sequence belongs to the RuvB family. In terms of assembly, homohexamer. Forms an RuvA(8)-RuvB(12)-Holliday junction (HJ) complex. HJ DNA is sandwiched between 2 RuvA tetramers; dsDNA enters through RuvA and exits via RuvB. An RuvB hexamer assembles on each DNA strand where it exits the tetramer. Each RuvB hexamer is contacted by two RuvA subunits (via domain III) on 2 adjacent RuvB subunits; this complex drives branch migration. In the full resolvosome a probable DNA-RuvA(4)-RuvB(12)-RuvC(2) complex forms which resolves the HJ.

The protein localises to the cytoplasm. The enzyme catalyses ATP + H2O = ADP + phosphate + H(+). Functionally, the RuvA-RuvB-RuvC complex processes Holliday junction (HJ) DNA during genetic recombination and DNA repair, while the RuvA-RuvB complex plays an important role in the rescue of blocked DNA replication forks via replication fork reversal (RFR). RuvA specifically binds to HJ cruciform DNA, conferring on it an open structure. The RuvB hexamer acts as an ATP-dependent pump, pulling dsDNA into and through the RuvAB complex. RuvB forms 2 homohexamers on either side of HJ DNA bound by 1 or 2 RuvA tetramers; 4 subunits per hexamer contact DNA at a time. Coordinated motions by a converter formed by DNA-disengaged RuvB subunits stimulates ATP hydrolysis and nucleotide exchange. Immobilization of the converter enables RuvB to convert the ATP-contained energy into a lever motion, pulling 2 nucleotides of DNA out of the RuvA tetramer per ATP hydrolyzed, thus driving DNA branch migration. The RuvB motors rotate together with the DNA substrate, which together with the progressing nucleotide cycle form the mechanistic basis for DNA recombination by continuous HJ branch migration. Branch migration allows RuvC to scan DNA until it finds its consensus sequence, where it cleaves and resolves cruciform DNA. The protein is Holliday junction branch migration complex subunit RuvB of Wolbachia sp. subsp. Brugia malayi (strain TRS).